Here is a 477-residue protein sequence, read N- to C-terminus: Bifunctional protein HldE (477 aa).

The interval 1–318 (MKVNLPAFER…ENAVRGRADT (318 aa)) is ribokinase. 195–198 (NLSE) is a binding site for ATP. D264 is an active-site residue. Positions 344–477 (MTNGVFDILH…IKKIQTESEK (134 aa)) are cytidylyltransferase.

This sequence in the N-terminal section; belongs to the carbohydrate kinase PfkB family. The protein in the C-terminal section; belongs to the cytidylyltransferase family. Homodimer.

It catalyses the reaction D-glycero-beta-D-manno-heptose 7-phosphate + ATP = D-glycero-beta-D-manno-heptose 1,7-bisphosphate + ADP + H(+). It carries out the reaction D-glycero-beta-D-manno-heptose 1-phosphate + ATP + H(+) = ADP-D-glycero-beta-D-manno-heptose + diphosphate. The protein operates within nucleotide-sugar biosynthesis; ADP-L-glycero-beta-D-manno-heptose biosynthesis; ADP-L-glycero-beta-D-manno-heptose from D-glycero-beta-D-manno-heptose 7-phosphate: step 1/4. It functions in the pathway nucleotide-sugar biosynthesis; ADP-L-glycero-beta-D-manno-heptose biosynthesis; ADP-L-glycero-beta-D-manno-heptose from D-glycero-beta-D-manno-heptose 7-phosphate: step 3/4. In terms of biological role, catalyzes the phosphorylation of D-glycero-D-manno-heptose 7-phosphate at the C-1 position to selectively form D-glycero-beta-D-manno-heptose-1,7-bisphosphate. Functionally, catalyzes the ADP transfer from ATP to D-glycero-beta-D-manno-heptose 1-phosphate, yielding ADP-D-glycero-beta-D-manno-heptose. This chain is Bifunctional protein HldE, found in Salmonella enteritidis PT4 (strain P125109).